A 275-amino-acid chain; its full sequence is Large ribosomal subunit protein uL2 (275 aa).

Positions 222–275 (GVAMNPVDHPHGGGEGRNKGRHPTSPWGQKSKGLKTRHNKRTDNMIIRRRAKKK) are disordered. A compositionally biased stretch (basic and acidic residues) spans 229–239 (DHPHGGGEGRN).

Belongs to the universal ribosomal protein uL2 family. In terms of assembly, part of the 50S ribosomal subunit. Forms a bridge to the 30S subunit in the 70S ribosome.

In terms of biological role, one of the primary rRNA binding proteins. Required for association of the 30S and 50S subunits to form the 70S ribosome, for tRNA binding and peptide bond formation. It has been suggested to have peptidyltransferase activity; this is somewhat controversial. Makes several contacts with the 16S rRNA in the 70S ribosome. The polypeptide is Large ribosomal subunit protein uL2 (Psychrobacter cryohalolentis (strain ATCC BAA-1226 / DSM 17306 / VKM B-2378 / K5)).